The sequence spans 383 residues: Spermidine/putrescine import ATP-binding protein PotA (383 aa).

The ABC transporter domain maps to 12 to 246 (IALRDISKVY…PSTPFVAGFI (235 aa)). 48–55 (GPSGCGKT) contributes to the ATP binding site.

Belongs to the ABC transporter superfamily. Spermidine/putrescine importer (TC 3.A.1.11.1) family. The complex is composed of two ATP-binding proteins (PotA), two transmembrane proteins (PotB and PotC) and a solute-binding protein (PotD).

Its subcellular location is the cell membrane. It catalyses the reaction ATP + H2O + polyamine-[polyamine-binding protein]Side 1 = ADP + phosphate + polyamineSide 2 + [polyamine-binding protein]Side 1.. Its function is as follows. Part of the ABC transporter complex PotABCD involved in spermidine/putrescine import. Responsible for energy coupling to the transport system. The protein is Spermidine/putrescine import ATP-binding protein PotA of Acidothermus cellulolyticus (strain ATCC 43068 / DSM 8971 / 11B).